The sequence spans 227 residues: Basic leucine zipper 24 (227 aa).

Residues 44–68 (EDKDQDRVTRGCSHTHSCNPPGPED) form a disordered region. In terms of domain architecture, bZIP spans 94-160 (DSSNKKRLCG…IRLRALLVEM (67 aa)). Residues 98–118 (KKRLCGNREAVRKYREKKKAR) form a basic motif region. Residues 122–129 (LEDEVMRL) form a leucine-zipper region.

Homodimer. Expressed in young leaves and cauline leaves.

The protein localises to the nucleus. The protein resides in the cytoplasm. In terms of biological role, transcription factor involved in the regulation of salt stress response. Functions as a negative transcriptional regulator of salt stress acclimation response by regulating cation homeostasis. Negatively regulates the expression of genes contributing to ion and osmotic homeostasis during salt stress, such as the Na(+) transporter HKT1, the Na(+)/H(+) antiporter SOS1, the aquaporin PIP2-1 and the glutamine synthetase GLN1-3. In addition, targets genes with functions in plant growth and development, such as argonaute 4 (AGO4) and cyclophilin 19 (CYP19). The protein is Basic leucine zipper 24 of Arabidopsis thaliana (Mouse-ear cress).